Consider the following 328-residue polypeptide: Fructosamine deglycase FrlB (328 aa).

2 consecutive SIS domains span residues 15–153 (FLQD…VLEN) and 181–311 (NAKQ…ELAE).

As to quaternary structure, homooctamer.

In terms of biological role, catalyzes the conversion of a range of fructosamine 6-phosphates to glucose 6-phosphate and a free amino acid. This is Fructosamine deglycase FrlB (frlB) from Bacillus subtilis (strain 168).